Consider the following 360-residue polypeptide: Histidinol-phosphate aminotransferase (360 aa).

The residue at position 219 (Lys219) is an N6-(pyridoxal phosphate)lysine.

It belongs to the class-II pyridoxal-phosphate-dependent aminotransferase family. Histidinol-phosphate aminotransferase subfamily. In terms of assembly, homodimer. Requires pyridoxal 5'-phosphate as cofactor.

The catalysed reaction is L-histidinol phosphate + 2-oxoglutarate = 3-(imidazol-4-yl)-2-oxopropyl phosphate + L-glutamate. It participates in amino-acid biosynthesis; L-histidine biosynthesis; L-histidine from 5-phospho-alpha-D-ribose 1-diphosphate: step 7/9. The chain is Histidinol-phosphate aminotransferase from Jannaschia sp. (strain CCS1).